Reading from the N-terminus, the 300-residue chain is Acetylglutamate kinase (300 aa).

Residues G68–G69, R90, and N195 contribute to the substrate site.

It belongs to the acetylglutamate kinase family. ArgB subfamily.

Its subcellular location is the cytoplasm. The enzyme catalyses N-acetyl-L-glutamate + ATP = N-acetyl-L-glutamyl 5-phosphate + ADP. Its pathway is amino-acid biosynthesis; L-arginine biosynthesis; N(2)-acetyl-L-ornithine from L-glutamate: step 2/4. Functionally, catalyzes the ATP-dependent phosphorylation of N-acetyl-L-glutamate. The sequence is that of Acetylglutamate kinase from Stutzerimonas stutzeri (strain A1501) (Pseudomonas stutzeri).